The following is a 581-amino-acid chain: Solute carrier family 15 member 3 (581 aa).

Residues 1 to 14 (MPAPRAREQPRVPG) show a composition bias toward basic and acidic residues. The tract at residues 1 to 26 (MPAPRAREQPRVPGERQPLLPRGARG) is disordered. A helical transmembrane segment spans residues 38-58 (VLLVEMLERAAFFGVTANLVL). Asn61 and Asn66 each carry an N-linked (GlcNAc...) asparagine glycan. 3 helical membrane-spanning segments follow: residues 76-96 (ALVF…LADV), 103-123 (AVAL…ATAF), and 155-175 (PYCA…ASSV). The N-linked (GlcNAc...) asparagine glycan is linked to Asn178. A helical membrane pass occupies residues 200-220 (NWFYWSINLGAVLSLLVVAFI). Asn223 is a glycosylation site (N-linked (GlcNAc...) asparagine). Transmembrane regions (helical) follow at residues 232-252 (IPVG…PVFI) and 310-330 (FQVL…WMVY). N-linked (GlcNAc...) asparagine glycosylation occurs at Asn356. A run of 2 helical transmembrane segments spans residues 369–389 (TIPE…LVPL) and 411–431 (MALG…LEME). An N-linked (GlcNAc...) asparagine glycan is attached at Asn439. 3 helical membrane passes run 458-478 (IWWQ…ASIP), 497-517 (GIFF…VALL), and 540-560 (LYFF…VWIA).

Belongs to the major facilitator superfamily. Proton-dependent oligopeptide transporter (POT/PTR) (TC 2.A.17) family.

The protein localises to the lysosome membrane. The protein resides in the endosome membrane. It catalyses the reaction glycylglycylglycine(out) + n H(+)(out) = glycylglycylglycine(in) + n H(+)(in). The enzyme catalyses carnosine(out) + n H(+)(out) = carnosine(in) + n H(+)(in). The catalysed reaction is L-histidine(out) + n H(+)(out) = L-histidine(in) + n H(+)(in). It carries out the reaction N-acetyl-D-muramoyl-L-alanyl-D-isoglutamine(out) + n H(+)(out) = N-acetyl-D-muramoyl-L-alanyl-D-isoglutamine(in) + n H(+)(in). Its function is as follows. Proton-coupled amino-acid transporter that transports free histidine and certain di- and tripeptides, and is involved in innate immune response. Also able to transport carnosine. Involved in the detection of microbial pathogens by toll-like receptors (TLRs) and NOD-like receptors (NLRs), probably by mediating transport of bacterial peptidoglycans across the endolysosomal membrane: catalyzes the transport of certain bacterial peptidoglycans, such as muramyl dipeptide (MDP), the NOD2 ligand. The protein is Solute carrier family 15 member 3 of Homo sapiens (Human).